An 808-amino-acid chain; its full sequence is Protein translocase subunit SecA (808 aa).

Residues Gln-87, 105–109 (GEGKT), and Asp-493 contribute to the ATP site.

The protein belongs to the SecA family. In terms of assembly, monomer and homodimer. Part of the essential Sec protein translocation apparatus which comprises SecA, SecYEG and auxiliary proteins SecDF. Other proteins may also be involved.

The protein localises to the cell membrane. It localises to the cytoplasm. The enzyme catalyses ATP + H2O + cellular proteinSide 1 = ADP + phosphate + cellular proteinSide 2.. In terms of biological role, part of the Sec protein translocase complex. Interacts with the SecYEG preprotein conducting channel. Has a central role in coupling the hydrolysis of ATP to the transfer of proteins into and across the cell membrane, serving as an ATP-driven molecular motor driving the stepwise translocation of polypeptide chains across the membrane. This is Protein translocase subunit SecA from Mycoplasma pneumoniae (strain ATCC 29342 / M129 / Subtype 1) (Mycoplasmoides pneumoniae).